Consider the following 142-residue polypeptide: Large ribosomal subunit protein uL11 (142 aa).

This sequence belongs to the universal ribosomal protein uL11 family. In terms of assembly, part of the ribosomal stalk of the 50S ribosomal subunit. Interacts with L10 and the large rRNA to form the base of the stalk. L10 forms an elongated spine to which L12 dimers bind in a sequential fashion forming a multimeric L10(L12)X complex. In terms of processing, one or more lysine residues are methylated.

Forms part of the ribosomal stalk which helps the ribosome interact with GTP-bound translation factors. The protein is Large ribosomal subunit protein uL11 of Klebsiella pneumoniae subsp. pneumoniae (strain ATCC 700721 / MGH 78578).